Here is a 176-residue protein sequence, read N- to C-terminus: Sperm-egg fusion protein TMEM95 (176 aa).

The N-terminal stretch at 1–16 (MWRLALGGVFLAAAQA) is a signal peptide. 4 disulfides stabilise this stretch: cysteine 17–cysteine 118, cysteine 20–cysteine 121, cysteine 105–cysteine 128, and cysteine 109–cysteine 134. Residues 17-145 (CVFCRLPAHD…PGSQDLWEAK (129 aa)) lie on the Extracellular side of the membrane. A helical membrane pass occupies residues 146-166 (ILLLSIFGAFLLLGVLSLLVE). Residues 167–176 (SHHLQAKSGL) are Cytoplasmic-facing.

This sequence belongs to the TMEM95 family. In terms of assembly, does not interact with sperm-egg fusion proteins IZUMO1 or IZUMO1R/JUNO. Post-translationally, N-glycosylated. As to expression, spermatozoa (at protein level).

It localises to the cytoplasmic vesicle. It is found in the secretory vesicle. The protein localises to the acrosome membrane. Its function is as follows. Sperm protein required for fusion of sperm with the egg membrane during fertilization. The protein is Sperm-egg fusion protein TMEM95 of Homo sapiens (Human).